A 261-amino-acid polypeptide reads, in one-letter code: Metallo-beta-lactamase fold-containing protein ST1585 (261 aa).

Residues H58, H60, D62, H63, H148, D165, and H207 each coordinate Zn(2+).

This sequence belongs to the metallo-beta-lactamase superfamily. In terms of assembly, monomer.

The sequence is that of Metallo-beta-lactamase fold-containing protein ST1585 from Sulfurisphaera tokodaii (strain DSM 16993 / JCM 10545 / NBRC 100140 / 7) (Sulfolobus tokodaii).